The chain runs to 575 residues: Sulfite reductase [NADPH] hemoprotein beta-component (575 aa).

Cys439, Cys445, Cys484, and Cys488 together coordinate [4Fe-4S] cluster. Position 488 (Cys488) interacts with siroheme.

The protein belongs to the nitrite and sulfite reductase 4Fe-4S domain family. Alpha(8)-beta(8). The alpha component is a flavoprotein, the beta component is a hemoprotein. Requires siroheme as cofactor. [4Fe-4S] cluster is required as a cofactor.

The enzyme catalyses hydrogen sulfide + 3 NADP(+) + 3 H2O = sulfite + 3 NADPH + 4 H(+). The protein operates within sulfur metabolism; hydrogen sulfide biosynthesis; hydrogen sulfide from sulfite (NADPH route): step 1/1. In terms of biological role, component of the sulfite reductase complex that catalyzes the 6-electron reduction of sulfite to sulfide. This is one of several activities required for the biosynthesis of L-cysteine from sulfate. In Blochmanniella pennsylvanica (strain BPEN), this protein is Sulfite reductase [NADPH] hemoprotein beta-component.